The primary structure comprises 585 residues: Frizzled-5 (585 aa).

An N-terminal signal peptide occupies residues 1 to 26; that stretch reads MARPDPSAPPSLLLLLLAQLVGRAAA. The Extracellular portion of the chain corresponds to 27–238; sequence ASKAPVCQEI…PDERTFATFW (212 aa). An FZ domain is found at 28-150; sequence SKAPVCQEIT…GDAEVLCMDY (123 aa). 5 disulfide bridges follow: cysteine 33/cysteine 94, cysteine 41/cysteine 87, cysteine 78/cysteine 116, cysteine 105/cysteine 147, and cysteine 109/cysteine 133. Asparagine 47 carries an N-linked (GlcNAc...) asparagine glycan. N-linked (GlcNAc...) asparagine glycosylation occurs at asparagine 151. A disordered region spans residues 156–182; sequence TTASPKSFPAKPTLPGPPGAPSSGGEC. Residues 239 to 259 form a helical membrane-spanning segment; the sequence is IGLWSVLCFISTSTTVATFLI. The Cytoplasmic segment spans residues 260-270; the sequence is DMERFRYPERP. A helical transmembrane segment spans residues 271–291; the sequence is IIFLSACYLCVSLGFLVRLVV. Topologically, residues 292–315 are extracellular; it reads GHASVACSREHSHIHYETTGPALC. Residues 316 to 336 form a helical membrane-spanning segment; it reads TVVFLLVYFFGMASSIWWVIL. Over 337–358 the chain is Cytoplasmic; the sequence is SLTWFLAAGMKWGNEAIAGYAQ. Residues 359 to 379 form a helical membrane-spanning segment; that stretch reads YFHLAAWLIPSVKSITALALS. Topologically, residues 380-402 are extracellular; sequence SVDGDPVAGICYVGNQNLNSLRG. Residues 403–423 traverse the membrane as a helical segment; the sequence is FVLGPLVLYLLVGTLFLLAGF. Residues 424 to 449 lie on the Cytoplasmic side of the membrane; sequence VSLFRIRSVIKQGGTKTDKLEKLMIR. The helical transmembrane segment at 450–470 threads the bilayer; sequence IGIFTLLYTVPASIVVACYLY. Residues 471-500 lie on the Extracellular side of the membrane; sequence EQHYRESWEAALTCACPGPDAGQPRAKPEY. A helical transmembrane segment spans residues 501–521; the sequence is WVLMLKYFMCLVVGITSGVWI. At 522-585 the chain is on the cytoplasmic side; sequence WSGKTLESWR…YHKQVSLSHV (64 aa). The PDZ-binding motif lies at 582–584; that stretch reads LSH.

It belongs to the G-protein coupled receptor Fz/Smo family. In terms of assembly, binding of unsaturated fatty acid molecules (via FZ domain) promotes homodimerization (via FZ domain). Interacts with WNT2B. Interacts with WNT7A. Interacts with GOPC. In terms of processing, ubiquitinated by RNF43 and ZNRF3, leading to its degradation by the proteasome. As to expression, detected in hippocampus (at protein level). Expressed in eye, kidney, lung, chondrocytes, epithelial cells of the small intestine and gobelet cells of the colon.

Its subcellular location is the cell membrane. The protein localises to the golgi apparatus membrane. It is found in the synapse. The protein resides in the perikaryon. It localises to the cell projection. Its subcellular location is the dendrite. The protein localises to the axon. Functionally, receptor for Wnt proteins. Functions in the canonical Wnt/beta-catenin signaling pathway. In vitro activates WNT2, WNT10B, WNT5A, but not WNT2B or WNT4 signaling. In neurons, activation by WNT7A promotes formation of synapses. May be involved in transduction and intercellular transmission of polarity information during tissue morphogenesis and/or in differentiated tissues. Plays a role in yolk sac angiogenesis and in placental vascularization. Plays a role in ocular development. This chain is Frizzled-5 (Fzd5), found in Mus musculus (Mouse).